A 44-amino-acid chain; its full sequence is Photosystem I reaction center subunit IX (44 aa).

Residues tyrosine 7–isoleucine 27 form a helical membrane-spanning segment.

This sequence belongs to the PsaJ family.

The protein localises to the plastid. It localises to the chloroplast thylakoid membrane. In terms of biological role, may help in the organization of the PsaE and PsaF subunits. The sequence is that of Photosystem I reaction center subunit IX from Cucumis sativus (Cucumber).